The chain runs to 148 residues: Large ribosomal subunit protein cL37 (148 aa).

A chloroplast-targeting transit peptide spans 1–65; it reads MALLCFNSLP…SSHGRIVVKA (65 aa). A66 bears the N-acetylalanine mark. The segment at 125 to 148 is disordered; sequence LVRKRKMRKKGRWPPSKMKKNKNV.

It belongs to the chloroplast-specific ribosomal protein cL37 family. As to quaternary structure, part of the 50S ribosomal subunit.

The protein localises to the plastid. It localises to the chloroplast. In Arabidopsis thaliana (Mouse-ear cress), this protein is Large ribosomal subunit protein cL37 (PSRP5).